The following is a 501-amino-acid chain: Bifunctional NAD(P)H-hydrate repair enzyme Nnr (501 aa).

The NAD(P)H-hydrate epimerase stretch occupies residues 1 to 221 (MESITSIEMY…PPEAELVVGP (221 aa)). Residues 9–217 (MYVADRNAEW…PIGIPPEAEL (209 aa)) form the YjeF N-terminal domain. Residues 56-60 (DNGGD) are NADPHX 1; for epimerase activity. The K(+) site is built by Asn57 and Asp127. The segment at 131-137 (GTGIRGV) is NADPHX 1; for epimerase activity. Asp160 is a binding site for (6S)-NADPHX. A K(+)-binding site is contributed by Ser163. Residues 220-495 (GPGDFAYLNF…ERLPRVIRRY (276 aa)) enclose the YjeF C-terminal domain. The segment at 221–501 (PGDFAYLNFT…IRRYAFESIR (281 aa)) is ADP-dependent (S)-NAD(P)H-hydrate dehydratase. (6S)-NADPHX is bound at residue Gly323. Positions 371–377 (HAGEFKA) are NADPHX 2; for dehydratase activity. Residues 408-412 (KGRYD) and 427-436 (TPAMTVGGTG) contribute to the ADP site. Asp437 provides a ligand contact to (6S)-NADPHX.

This sequence in the N-terminal section; belongs to the NnrE/AIBP family. The protein in the C-terminal section; belongs to the NnrD/CARKD family. K(+) is required as a cofactor.

It carries out the reaction (6S)-NADHX + ADP = AMP + phosphate + NADH + H(+). The enzyme catalyses (6S)-NADPHX + ADP = AMP + phosphate + NADPH + H(+). It catalyses the reaction (6R)-NADHX = (6S)-NADHX. The catalysed reaction is (6R)-NADPHX = (6S)-NADPHX. Its function is as follows. Bifunctional enzyme that catalyzes the epimerization of the S- and R-forms of NAD(P)HX and the dehydration of the S-form of NAD(P)HX at the expense of ADP, which is converted to AMP. This allows the repair of both epimers of NAD(P)HX, a damaged form of NAD(P)H that is a result of enzymatic or heat-dependent hydration. This Pyrobaculum aerophilum (strain ATCC 51768 / DSM 7523 / JCM 9630 / CIP 104966 / NBRC 100827 / IM2) protein is Bifunctional NAD(P)H-hydrate repair enzyme Nnr (nnr).